Consider the following 257-residue polypeptide: Indole-3-glycerol phosphate synthase (257 aa).

Belongs to the TrpC family.

It carries out the reaction 1-(2-carboxyphenylamino)-1-deoxy-D-ribulose 5-phosphate + H(+) = (1S,2R)-1-C-(indol-3-yl)glycerol 3-phosphate + CO2 + H2O. It functions in the pathway amino-acid biosynthesis; L-tryptophan biosynthesis; L-tryptophan from chorismate: step 4/5. The polypeptide is Indole-3-glycerol phosphate synthase (Phenylobacterium zucineum (strain HLK1)).